Reading from the N-terminus, the 101-residue chain is NAD(P)H-quinone oxidoreductase subunit 4L, chloroplastic (101 aa).

The next 3 helical transmembrane spans lie at 2 to 22 (ILEH…YGLI), 32 to 52 (MCLE…SDFF), and 61 to 81 (IFCI…LAIV).

This sequence belongs to the complex I subunit 4L family. NDH is composed of at least 16 different subunits, 5 of which are encoded in the nucleus.

Its subcellular location is the plastid. The protein resides in the chloroplast thylakoid membrane. It carries out the reaction a plastoquinone + NADH + (n+1) H(+)(in) = a plastoquinol + NAD(+) + n H(+)(out). It catalyses the reaction a plastoquinone + NADPH + (n+1) H(+)(in) = a plastoquinol + NADP(+) + n H(+)(out). Its function is as follows. NDH shuttles electrons from NAD(P)H:plastoquinone, via FMN and iron-sulfur (Fe-S) centers, to quinones in the photosynthetic chain and possibly in a chloroplast respiratory chain. The immediate electron acceptor for the enzyme in this species is believed to be plastoquinone. Couples the redox reaction to proton translocation, and thus conserves the redox energy in a proton gradient. The protein is NAD(P)H-quinone oxidoreductase subunit 4L, chloroplastic of Draba nemorosa (Woodland whitlowgrass).